A 431-amino-acid polypeptide reads, in one-letter code: 23S rRNA (uracil(1939)-C(5))-methyltransferase RlmD (431 aa).

Residues 10-68 (RVTTRQIITVKVNDLDSFGQGVARHNGKALFIPGLLPEESAEVIITEDKKQFARARVSR) form the TRAM domain. [4Fe-4S] cluster contacts are provided by Cys81, Cys87, Cys90, and Cys161. Gln264, Phe293, Asn298, Glu314, Asn341, and Asp362 together coordinate S-adenosyl-L-methionine. Cys388 acts as the Nucleophile in catalysis.

This sequence belongs to the class I-like SAM-binding methyltransferase superfamily. RNA M5U methyltransferase family. RlmD subfamily.

It carries out the reaction uridine(1939) in 23S rRNA + S-adenosyl-L-methionine = 5-methyluridine(1939) in 23S rRNA + S-adenosyl-L-homocysteine + H(+). Its function is as follows. Catalyzes the formation of 5-methyl-uridine at position 1939 (m5U1939) in 23S rRNA. The sequence is that of 23S rRNA (uracil(1939)-C(5))-methyltransferase RlmD from Salmonella choleraesuis (strain SC-B67).